The sequence spans 317 residues: Carbonic anhydrase 5B, mitochondrial (317 aa).

Residues 1–33 (MAVMNHLRVILQVSSSTLPWRRCWVPRLVPRRS) constitute a mitochondrion transit peptide. The Alpha-carbonic anhydrase domain occupies 37–296 (YTCTYRTRNR…LMNRTVRSSF (260 aa)). The Zn(2+) site is built by H130, H132, and H155. 235–236 (TT) contributes to the substrate binding site.

Belongs to the alpha-carbonic anhydrase family. It depends on Zn(2+) as a cofactor. Expressed in the heart, liver, lung, kidney, testis, and skeletal muscle (at protein level).

It localises to the mitochondrion. It carries out the reaction hydrogencarbonate + H(+) = CO2 + H2O. In terms of biological role, mitochondrial carbonic anhydrase that catalyzes the reversible conversion of carbon dioxide to bicarbonate/HCO3. The sequence is that of Carbonic anhydrase 5B, mitochondrial (Ca5b) from Mus musculus (Mouse).